The primary structure comprises 426 residues: MVCVACVEENKGCECEHEKPVRELVLEAASENSSFLHSVINMVGMLIGLGQLSMPYAVESGGWMSIFLLISFGILTTYTSHILGKCIRRNPKSKSYSDIGYSAFGRHGRLIVCLFIYLEIFMALVSYTISLHDNISAAFPATFSNHGHFPAAKLTAVAVAIALPSLWIRDLSSISFLSSGGILMSAIIFGSVVYTAIFGGVIDDGKIPVLRLENIPTVSGIYLFSFGGHIVFPNLYTSMKDPSKFTKVSIVSFATVTALYGALAITGAKMFGPSVNSQITLSLPKHLVVTKIALWATVLTPMTKYALEFAPLAIQLERSLPSTMTDRTKLVARGLMGSALLLVILALALTVPYFGYVLSLTGSLVSVTIAVTLPSAFYLKICWDGMTKFTRAANLGFVVLGCVLGVLGSFESSKLLVKELVRVHGG.

Transmembrane regions (helical) follow at residues 34–54, 55–75, 110–130, 148–168, 182–202, 215–235, 248–268, 292–312, 340–360, 363–383, and 392–412; these read SFLH…QLSM, PYAV…FGIL, LIVC…YTIS, HFPA…SLWI, ILMS…GGVI, IPTV…FPNL, VSIV…ITGA, IALW…FAPL, LLLV…VLSL, SLVS…KICW, and AANL…SFES.

It belongs to the amino acid/polyamine transporter 2 family. Amino acid/auxin permease (AAAP) (TC 2.A.18.5) subfamily.

It localises to the membrane. The polypeptide is Amino acid transporter AVT1H (Arabidopsis thaliana (Mouse-ear cress)).